Consider the following 363-residue polypeptide: Aminomethyltransferase (363 aa).

Belongs to the GcvT family. The glycine cleavage system is composed of four proteins: P, T, L and H.

It catalyses the reaction N(6)-[(R)-S(8)-aminomethyldihydrolipoyl]-L-lysyl-[protein] + (6S)-5,6,7,8-tetrahydrofolate = N(6)-[(R)-dihydrolipoyl]-L-lysyl-[protein] + (6R)-5,10-methylene-5,6,7,8-tetrahydrofolate + NH4(+). The glycine cleavage system catalyzes the degradation of glycine. This is Aminomethyltransferase from Thermotoga neapolitana (strain ATCC 49049 / DSM 4359 / NBRC 107923 / NS-E).